Here is a 713-residue protein sequence, read N- to C-terminus: Nucleolin (713 aa).

Residues 1 to 309 are disordered; it reads MVKLAKAGKT…QKIEGSEPTT (309 aa). N6-acetyllysine occurs at positions 9, 15, and 16. Residues 24–46 show a composition bias toward acidic residues; sequence VEEDSEDEEMSEDEDDSSGEEEV. Ser28, Ser34, Ser40, and Ser41 each carry phosphoserine. Over residues 56–111 the composition is skewed to low complexity; it reads ATTTPAKKVVVSQTKKAAVPTPAKKAAVTPGKKAAATPAKKAVTPAKVVPTPGKKG. Repeat 1 spans residues 58-65; sequence TTPAKKVV. Positions 58 to 135 are 8 X 8 AA tandem repeats of X-T-P-X-K-K-X-X; the sequence is TTPAKKVVVS…GAVTPAKGAK (78 aa). Ser67 carries the post-translational modification Phosphoserine. A phosphothreonine mark is found at Thr69, Thr76, Thr84, and Thr92. 3 consecutive repeat copies span residues 75 to 82, 83 to 90, and 91 to 98. Lys96 is modified (N6-acetyllysine). Phosphothreonine is present on Thr99. The 5; truncated repeat unit spans residues 99 to 104; that stretch reads TPAKVV. Lys102 bears the N6-acetyllysine mark. The stretch at 105–112 is repeat 6; it reads PTPGKKGA. Residue Thr106 is modified to Phosphothreonine. 2 positions are modified to N6-acetyllysine: Lys109 and Lys116. A run of 2 repeats spans residues 120 to 127 and 128 to 135. A Phosphothreonine modification is found at Thr121. At Lys124 the chain carries N6-acetyllysine. 2 positions are modified to phosphoserine: Ser145 and Ser157. Over residues 145–168 the composition is skewed to acidic residues; the sequence is SDEDEDEEDEDDSDEDEDEEDEFE. Low complexity predominate over residues 169–186; sequence PPVVKGVKPAKAAPAAPA. Ser187 and Ser213 each carry phosphoserine. The segment covering 187-218 has biased composition (acidic residues); the sequence is SEDEDEEDDDDEDDDDDDEEEEEEDDSEEEVM. Thr221 carries the post-translational modification Phosphothreonine. Over residues 242–275 the composition is skewed to acidic residues; that stretch reads EEEEDDEDDEDEEEDEDEEDEEDDEDEDEEEEEE. The span at 288 to 304 shows a compositional bias: basic and acidic residues; it reads MTKQKEAPEAKKQKIEG. Residue Lys301 forms a Glycyl lysine isopeptide (Lys-Gly) (interchain with G-Cter in SUMO1); alternate linkage. Lys301 is covalently cross-linked (Glycyl lysine isopeptide (Lys-Gly) (interchain with G-Cter in SUMO2); alternate). Ser305 is subject to Phosphoserine. RRM domains lie at 311 to 387 and 397 to 470; these read FNLF…KPKG and RTLL…YTGE. An N6-acetyllysine modification is found at Lys322. Residue Lys328 forms a Glycyl lysine isopeptide (Lys-Gly) (interchain with G-Cter in SUMO1); alternate linkage. Lys328 is covalently cross-linked (Glycyl lysine isopeptide (Lys-Gly) (interchain with G-Cter in SUMO2); alternate). Lys352 is subject to N6-acetyllysine. Residue Ser360 is modified to Phosphoserine. Thr371 carries the post-translational modification Phosphothreonine. Lys374 participates in a covalent cross-link: Glycyl lysine isopeptide (Lys-Gly) (interchain with G-Cter in SUMO2). Residue Lys381 forms a Glycyl lysine isopeptide (Lys-Gly) (interchain with G-Cter in SUMO2); alternate linkage. N6-acetyllysine; alternate is present on Lys381. An N6-acetyllysine modification is found at Lys402. Phosphoserine is present on Ser405. Residue Thr409 is modified to Phosphothreonine. Lys448 carries the post-translational modification N6-acetyllysine. Phosphoserine is present on residues Ser462 and Ser464. N6-acetyllysine is present on residues Lys471 and Lys480. The RRM 3 domain maps to 489 to 563; the sequence is KTLVLSNLSY…RTIRLELQGP (75 aa). Lys516 is covalently cross-linked (Glycyl lysine isopeptide (Lys-Gly) (interchain with G-Cter in SUMO2); alternate). N6-acetyllysine; alternate is present on Lys516. An N6-acetyllysine modification is found at Lys524. Ser566 is subject to Phosphoserine. An N6-acetyllysine modification is found at Lys575. The 76-residue stretch at 575-650 folds into the RRM 4 domain; that stretch reads KTLFVKGLSE…NKVTLDWAKP (76 aa). Residue Lys580 forms a Glycyl lysine isopeptide (Lys-Gly) (interchain with G-Cter in SUMO2); alternate linkage. An N6-acetyllysine; alternate modification is found at Lys580. Ser583 is subject to Phosphoserine. Lys592 participates in a covalent cross-link: Glycyl lysine isopeptide (Lys-Gly) (interchain with G-Cter in SUMO1); alternate. A Glycyl lysine isopeptide (Lys-Gly) (interchain with G-Cter in SUMO2); alternate cross-link involves residue Lys592. Ser594 and Ser622 each carry phosphoserine. Lys627 participates in a covalent cross-link: Glycyl lysine isopeptide (Lys-Gly) (interchain with G-Cter in SUMO2). The tract at residues 645-713 is disordered; the sequence is LDWAKPKGEG…KPQGKKTKFE (69 aa). Lys649 is modified (N6-acetyllysine). The segment covering 653-702 has biased composition (gly residues); that stretch reads EGGFGGRGGGRGGFGGRGGGRGGRGGFGGRGRGGFGGRGGFRGGRGGGGD. An asymmetric dimethylarginine mark is found at Arg659, Arg663, Arg669, Arg673, Arg676, Arg682, Arg684, Arg690, and Arg694. Arg697 is subject to Asymmetric dimethylarginine; alternate. Position 697 is an omega-N-methylarginine; alternate (Arg697).

As to quaternary structure, identified in a IGF2BP1-dependent mRNP granule complex containing untranslated mRNAs. Component of the SWAP complex that consists of NPM1, NCL/nucleolin, PARP1 and SWAP70. Component of a complex which is at least composed of HTATSF1/Tat-SF1, the P-TEFb complex components CDK9 and CCNT1, RNA polymerase II, SUPT5H, and NCL/nucleolin. Interacts with AICDA. Interacts with APTX. Interacts with C1QBP. Interacts with ERBB4. Interacts (via C-terminus) with FMR1 isoform 6 (via N-terminus). Interacts with GZF1; this interaction is important for nucleolar localization of GZF1. Interacts with NSUN2. Interacts with NVL. Interacts (via N-terminus domain) with SETX. Interacts (via RRM1 and C-terminal RRM4/Arg/Gly-rich domains) with TERT; the interaction is important for nucleolar localization of TERT. Interacts with WDR46. Interacts with ZFP36. Interacts with LRRC34. Interacts with RRP1B. Interacts with HNRNPU; this interaction occurs during mitosis. Interacts with RIOK1; RIOK1 recruits NCL to PRMT5 for symmetrically methylation. Interacts with ZBTB7B. Interacts with MDK; this interaction promotes NCL clustering and lateral movements of this complex into lipid rafts leading to MDK internalization. Interacts with HDGF. Interacts with ALKBH2. Interacts with IGFBP5; this interaction is necessary for IGFBP5 localization to the nucleus. Interacts with DDX24 (when ubiquitinated); this interaction may be important during ribosome biogenesis. In terms of processing, some glutamate residues are glycylated by TTLL8. This modification occurs exclusively on glutamate residues and results in a glycine chain on the gamma-carboxyl group. Symmetrically methylated by PRMT5.

It is found in the nucleus. Its subcellular location is the nucleolus. The protein resides in the cytoplasm. In terms of biological role, nucleolin is the major nucleolar protein of growing eukaryotic cells. It is found associated with intranucleolar chromatin and pre-ribosomal particles. It induces chromatin decondensation by binding to histone H1. It is thought to play a role in pre-rRNA transcription and ribosome assembly. May play a role in the process of transcriptional elongation. Binds RNA oligonucleotides with 5'-UUAGGG-3' repeats more tightly than the telomeric single-stranded DNA 5'-TTAGGG-3' repeats. The sequence is that of Nucleolin (Ncl) from Rattus norvegicus (Rat).